We begin with the raw amino-acid sequence, 251 residues long: CDP-diacylglycerol pyrophosphatase (251 aa).

A helical membrane pass occupies residues 4 to 24 (AGLLFLVMIVIAVVATGIGYW).

Belongs to the Cdh family.

The protein localises to the cell inner membrane. It catalyses the reaction a CDP-1,2-diacyl-sn-glycerol + H2O = a 1,2-diacyl-sn-glycero-3-phosphate + CMP + 2 H(+). It functions in the pathway phospholipid metabolism; CDP-diacylglycerol degradation; phosphatidate from CDP-diacylglycerol: step 1/1. The polypeptide is CDP-diacylglycerol pyrophosphatase (Escherichia coli O45:K1 (strain S88 / ExPEC)).